The chain runs to 204 residues: Urease accessory protein UreG (204 aa).

12–19 (GPVGSGKT) contributes to the GTP binding site.

It belongs to the SIMIBI class G3E GTPase family. UreG subfamily. Homodimer. UreD, UreF and UreG form a complex that acts as a GTP-hydrolysis-dependent molecular chaperone, activating the urease apoprotein by helping to assemble the nickel containing metallocenter of UreC. The UreE protein probably delivers the nickel.

It is found in the cytoplasm. Functionally, facilitates the functional incorporation of the urease nickel metallocenter. This process requires GTP hydrolysis, probably effectuated by UreG. The chain is Urease accessory protein UreG from Ectopseudomonas mendocina (strain ymp) (Pseudomonas mendocina).